The chain runs to 185 residues: Elongation factor P (185 aa).

The protein belongs to the elongation factor P family.

It localises to the cytoplasm. It functions in the pathway protein biosynthesis; polypeptide chain elongation. Functionally, involved in peptide bond synthesis. Stimulates efficient translation and peptide-bond synthesis on native or reconstituted 70S ribosomes in vitro. Probably functions indirectly by altering the affinity of the ribosome for aminoacyl-tRNA, thus increasing their reactivity as acceptors for peptidyl transferase. The polypeptide is Elongation factor P (Clostridium kluyveri (strain ATCC 8527 / DSM 555 / NBRC 12016 / NCIMB 10680 / K1)).